A 972-amino-acid polypeptide reads, in one-letter code: Cycloisomaltooligosaccharide glucanotransferase (972 aa).

The N-terminal stretch at 1-38 is a signal peptide; sequence MVRFMYALRKRRLSLLLAMSLLVMCVASVVSPPPQALA. CBM6 domains lie at 421–546 and 748–871; these read TRYE…LTLG and DIYE…LDLD.

This sequence belongs to the glycosyl hydrolase 66 family. Monomer.

The catalysed reaction is cyclizes part of a (1-&gt;6)-alpha-D-glucan chain by formation of a (1-&gt;6)-alpha-D-glucosidic bond.. Produces cycloisomaltooligosaccharide from dextran containing 7, 8 or 9 glucose units. The enzyme is specific for (1-&gt;6)-alpha-D-glucans (dextrans) and, without activity toward (1-&gt;4)-alpha-D-glucans, such as amylose. It also has no activity on oligosaccharides, such as amylopectin and pullulan, containing (1-&gt;6)-alpha-D-glucosidic linkages at branch points. This chain is Cycloisomaltooligosaccharide glucanotransferase, found in Niallia circulans (Bacillus circulans).